Reading from the N-terminus, the 418-residue chain is MTVAEKIRKIAADARAASLAMARLSSAAKNELLLRMAEALENNAPLITAENARDLEAGQQKGLSAAMLDRLMLDESRIKAMADGLREVAALPDPVGEVTHMWKRPNEITVGKMRIPLGVIGIIYESRPNVTSDAAALCLKAGNAVVLRGGSEAIHSNLAIAGLLQDQMRKLGIPVAALSLIPFPERAGVTEMLKQEEFIDVIIPRGGESLIRFVVEHSKIPVIKHYKGVCHIFVDATADFGMAEKIIINSKTQRPGVCNALETLLIHKDVAETFVPRIHEALSTLKVELRGDEAFRQFAPGVKAATEEDWYAEYLELILAARVVDDLDEAIAHINKYGSLHTEAIITSDYANSQRFLREVNSSVVLVNASTRFSDGNQLGLGAEIGISTTKLHSFGPMGLEDLTTTKFIVYGEGQIRQ.

Belongs to the gamma-glutamyl phosphate reductase family.

The protein resides in the cytoplasm. The catalysed reaction is L-glutamate 5-semialdehyde + phosphate + NADP(+) = L-glutamyl 5-phosphate + NADPH + H(+). Its pathway is amino-acid biosynthesis; L-proline biosynthesis; L-glutamate 5-semialdehyde from L-glutamate: step 2/2. In terms of biological role, catalyzes the NADPH-dependent reduction of L-glutamate 5-phosphate into L-glutamate 5-semialdehyde and phosphate. The product spontaneously undergoes cyclization to form 1-pyrroline-5-carboxylate. The chain is Gamma-glutamyl phosphate reductase from Geotalea daltonii (strain DSM 22248 / JCM 15807 / FRC-32) (Geobacter daltonii).